The following is a 734-amino-acid chain: Photosystem I P700 chlorophyll a apoprotein A2 (734 aa).

A run of 8 helical transmembrane segments spans residues 46–69 (IFAS…FHVA), 135–158 (LYTG…LHLQ), 175–199 (LNHH…HVAI), 273–291 (IAHH…GHMY), 330–353 (VHFQ…QHMY), 369–395 (AALY…IFFI), 417–439 (AIIS…LYVH), and 517–535 (FLVH…LILV). Positions 559 and 568 each coordinate [4Fe-4S] cluster. Helical transmembrane passes span 575 to 596 (AFYL…YWHW) and 643 to 665 (LSVW…MFLI). His654, Met662, and Tyr670 together coordinate chlorophyll a. Trp671 is a phylloquinone binding site. A helical transmembrane segment spans residues 707-727 (LVGLAHFSVGYIFTYAAFLIA).

It belongs to the PsaA/PsaB family. The PsaA/B heterodimer binds the P700 chlorophyll special pair and subsequent electron acceptors. PSI consists of a core antenna complex that captures photons, and an electron transfer chain that converts photonic excitation into a charge separation. The eukaryotic PSI reaction center is composed of at least 11 subunits. P700 is a chlorophyll a/chlorophyll a' dimer, A0 is one or more chlorophyll a, A1 is one or both phylloquinones and FX is a shared 4Fe-4S iron-sulfur center. serves as cofactor.

It is found in the plastid. It localises to the chloroplast thylakoid membrane. The catalysed reaction is reduced [plastocyanin] + hnu + oxidized [2Fe-2S]-[ferredoxin] = oxidized [plastocyanin] + reduced [2Fe-2S]-[ferredoxin]. Its function is as follows. PsaA and PsaB bind P700, the primary electron donor of photosystem I (PSI), as well as the electron acceptors A0, A1 and FX. PSI is a plastocyanin-ferredoxin oxidoreductase, converting photonic excitation into a charge separation, which transfers an electron from the donor P700 chlorophyll pair to the spectroscopically characterized acceptors A0, A1, FX, FA and FB in turn. Oxidized P700 is reduced on the lumenal side of the thylakoid membrane by plastocyanin. The chain is Photosystem I P700 chlorophyll a apoprotein A2 from Platanus occidentalis (Sycamore).